A 25-amino-acid polypeptide reads, in one-letter code: Caerin-2.3 (25 aa).

Expressed by the skin parotoid and/or rostral glands.

The protein localises to the secreted. Functionally, acts as a male sex pheromone that attracts females. Has no antimicrobial activity. This Ranoidea caerulea (Green tree frog) protein is Caerin-2.3.